Here is a 133-residue protein sequence, read N- to C-terminus: Probable non-specific lipid-transfer protein 2 (133 aa).

Positions 1-31 (MRTVSMAALVVIAAALAWTSSAEPAPAPAPG) are cleaved as a signal peptide. 4 disulfide bridges follow: C35–C83, C45–C60, C61–C106, and C81–C121.

Belongs to the plant LTP family.

Plant non-specific lipid-transfer proteins transfer phospholipids as well as galactolipids across membranes. May play a role in wax or cutin deposition in the cell walls of expanding epidermal cells and certain secretory tissues. The protein is Probable non-specific lipid-transfer protein 2 of Parietaria judaica (Pellitory-of-the-wall).